Consider the following 432-residue polypeptide: 2-oxoglutarate-dependent dioxygenase AOP2 (432 aa).

The region spanning Ser281–Pro378 is the Fe2OG dioxygenase domain. 3 residues coordinate Fe cation: His301, Asp303, and His358. Residue Arg369 participates in 2-oxoglutarate binding.

This sequence belongs to the iron/ascorbate-dependent oxidoreductase family. It depends on Fe(2+) as a cofactor.

2-oxoglutarate-dependent dioxygenase involved in glucosinolates biosynthesis. Catalyzes the conversion of methylsulfinylalkyl glucosinolates to alkenyl glucosinolates. The protein is 2-oxoglutarate-dependent dioxygenase AOP2 (AOP2) of Arabidopsis thaliana (Mouse-ear cress).